Reading from the N-terminus, the 132-residue chain is Probable prefoldin subunit 4 (132 aa).

It belongs to the prefoldin subunit beta family. Heterohexamer of two PFD-alpha type and four PFD-beta type subunits.

Its function is as follows. Binds specifically to cytosolic chaperonin (c-CPN) and transfers target proteins to it. Binds to nascent polypeptide chain and promotes folding in an environment in which there are many competing pathways for nonnative proteins. The protein is Probable prefoldin subunit 4 (pfdn4) of Dictyostelium discoideum (Social amoeba).